We begin with the raw amino-acid sequence, 357 residues long: RNA 3'-terminal phosphate cyclase (357 aa).

ATP is bound by residues Gln102 and 293-296 (HMGD). His319 (tele-AMP-histidine intermediate) is an active-site residue.

It belongs to the RNA 3'-terminal cyclase family. Type 1 subfamily.

It localises to the cytoplasm. It carries out the reaction a 3'-end 3'-phospho-ribonucleotide-RNA + ATP = a 3'-end 2',3'-cyclophospho-ribonucleotide-RNA + AMP + diphosphate. Functionally, catalyzes the conversion of 3'-phosphate to a 2',3'-cyclic phosphodiester at the end of RNA. The mechanism of action of the enzyme occurs in 3 steps: (A) adenylation of the enzyme by ATP; (B) transfer of adenylate to an RNA-N3'P to produce RNA-N3'PP5'A; (C) and attack of the adjacent 2'-hydroxyl on the 3'-phosphorus in the diester linkage to produce the cyclic end product. The biological role of this enzyme is unknown but it is likely to function in some aspects of cellular RNA processing. This is RNA 3'-terminal phosphate cyclase from Desulfurococcus amylolyticus (strain DSM 18924 / JCM 16383 / VKM B-2413 / 1221n) (Desulfurococcus kamchatkensis).